Here is a 477-residue protein sequence, read N- to C-terminus: Succinate-semialdehyde dehydrogenase [NADP(+)] (477 aa).

NADP(+)-binding positions include 142–143 (WN), 166–169 (KHSE), and 218–219 (GS). The active-site Proton acceptor is Glu240. Leu241 contacts NADP(+). The active-site Nucleophile is Cys274. Glu371 lines the NADP(+) pocket.

The protein belongs to the aldehyde dehydrogenase family.

The enzyme catalyses succinate semialdehyde + NADP(+) + H2O = succinate + NADPH + 2 H(+). The protein operates within amino-acid degradation; 4-aminobutanoate degradation. Its function is as follows. Catalyzes the NADP(+) dependent oxidation of succinate semialdehyde to succinate. This chain is Succinate-semialdehyde dehydrogenase [NADP(+)] (ssdA), found in Deinococcus radiodurans (strain ATCC 13939 / DSM 20539 / JCM 16871 / CCUG 27074 / LMG 4051 / NBRC 15346 / NCIMB 9279 / VKM B-1422 / R1).